The chain runs to 138 residues: Small ribosomal subunit protein uS11c (138 aa).

It belongs to the universal ribosomal protein uS11 family. As to quaternary structure, part of the 30S ribosomal subunit.

It localises to the plastid. It is found in the chloroplast. The chain is Small ribosomal subunit protein uS11c from Phaseolus vulgaris (Kidney bean).